We begin with the raw amino-acid sequence, 351 residues long: MSRAPRTAKGETARAEPARHVPVLLAEVLAALALDRPGLAVDGTFGAGGYTRALLESGPDMRVIAIDRDPTAIRAGADLVEGAGGRLRLVQGRFGDLDTLLADQGEAQADWVVLDIGVSSMQLDEAHRGFSFRQDGPLDMRMGGEGPSAADLVNGEEESTLADILYHFGEERRSRAVARAIVEARRRAPIATTAQLADLIAGVVRPEPGSPIHPATRSFQGLRIAVNDELGELVRGLHAAERVLKPGGRLAVVTFHSLEDRIVKQFFSARSGRAAQASRHLPGVERPAPKSFRLVTKGPVLPSEAETEVNPRARSAKLRAGERTDGPAPPPLSAIETLASLPAPQGRGTRR.

S-adenosyl-L-methionine is bound by residues 48-50, Asp-67, Phe-94, Asp-115, and Gln-122; that span reads GGY. The segment at 298–351 is disordered; the sequence is GPVLPSEAETEVNPRARSAKLRAGERTDGPAPPPLSAIETLASLPAPQGRGTRR.

This sequence belongs to the methyltransferase superfamily. RsmH family.

The protein localises to the cytoplasm. The catalysed reaction is cytidine(1402) in 16S rRNA + S-adenosyl-L-methionine = N(4)-methylcytidine(1402) in 16S rRNA + S-adenosyl-L-homocysteine + H(+). In terms of biological role, specifically methylates the N4 position of cytidine in position 1402 (C1402) of 16S rRNA. In Methylorubrum populi (strain ATCC BAA-705 / NCIMB 13946 / BJ001) (Methylobacterium populi), this protein is Ribosomal RNA small subunit methyltransferase H.